The sequence spans 428 residues: Serine--tRNA ligase (428 aa).

231–233 (TAE) is a binding site for L-serine. 262–264 (RSE) contacts ATP. Glu-285 lines the L-serine pocket. 349–352 (EISS) serves as a coordination point for ATP. Residue Ser-385 participates in L-serine binding.

The protein belongs to the class-II aminoacyl-tRNA synthetase family. Type-1 seryl-tRNA synthetase subfamily. Homodimer. The tRNA molecule binds across the dimer.

The protein resides in the cytoplasm. The catalysed reaction is tRNA(Ser) + L-serine + ATP = L-seryl-tRNA(Ser) + AMP + diphosphate + H(+). It catalyses the reaction tRNA(Sec) + L-serine + ATP = L-seryl-tRNA(Sec) + AMP + diphosphate + H(+). The protein operates within aminoacyl-tRNA biosynthesis; selenocysteinyl-tRNA(Sec) biosynthesis; L-seryl-tRNA(Sec) from L-serine and tRNA(Sec): step 1/1. In terms of biological role, catalyzes the attachment of serine to tRNA(Ser). Is also able to aminoacylate tRNA(Sec) with serine, to form the misacylated tRNA L-seryl-tRNA(Sec), which will be further converted into selenocysteinyl-tRNA(Sec). The chain is Serine--tRNA ligase from Staphylococcus epidermidis (strain ATCC 35984 / DSM 28319 / BCRC 17069 / CCUG 31568 / BM 3577 / RP62A).